A 159-amino-acid polypeptide reads, in one-letter code: Ribosomal RNA large subunit methyltransferase H (159 aa).

Residues L76, G108, and 127 to 132 (MSKMTF) each bind S-adenosyl-L-methionine.

Belongs to the RNA methyltransferase RlmH family. In terms of assembly, homodimer.

It is found in the cytoplasm. The catalysed reaction is pseudouridine(1915) in 23S rRNA + S-adenosyl-L-methionine = N(3)-methylpseudouridine(1915) in 23S rRNA + S-adenosyl-L-homocysteine + H(+). Functionally, specifically methylates the pseudouridine at position 1915 (m3Psi1915) in 23S rRNA. The sequence is that of Ribosomal RNA large subunit methyltransferase H from Ureaplasma parvum serovar 3 (strain ATCC 27815 / 27 / NCTC 11736).